The sequence spans 216 residues: Large ribosomal subunit protein uL1y (216 aa).

The protein belongs to the universal ribosomal protein uL1 family. In terms of assembly, interacts with the GTPase NUG2.

The protein is Large ribosomal subunit protein uL1y (RPL10AB) of Arabidopsis thaliana (Mouse-ear cress).